A 493-amino-acid chain; its full sequence is Cysteine--tRNA ligase (493 aa).

Residue Cys-31 coordinates Zn(2+). Residues 33–43 (PTVYGDAHLGH) carry the 'HIGH' region motif. Zn(2+)-binding residues include Cys-226, His-251, and Glu-255. Positions 283–287 (KMGKS) match the 'KMSKS' region motif. Lys-286 provides a ligand contact to ATP.

The protein belongs to the class-I aminoacyl-tRNA synthetase family. In terms of assembly, monomer. Requires Zn(2+) as cofactor.

It localises to the cytoplasm. The enzyme catalyses tRNA(Cys) + L-cysteine + ATP = L-cysteinyl-tRNA(Cys) + AMP + diphosphate. The chain is Cysteine--tRNA ligase from Bacteroides thetaiotaomicron (strain ATCC 29148 / DSM 2079 / JCM 5827 / CCUG 10774 / NCTC 10582 / VPI-5482 / E50).